A 211-amino-acid polypeptide reads, in one-letter code: Degradation in the endoplasmic reticulum protein 1 (211 aa).

N-acetylmethionine is present on methionine 1. Residues 1–14 (MDAVILNLLGDIPL) lie on the Cytoplasmic side of the membrane. Residues 15–32 (VTRLWTIGCLVLSGLTSL) form a helical membrane-spanning segment. Residues 33-67 (RIVDPGKVVYSYDLVFKKGQYGRLLYSIFDYGAFN) are Lumenal-facing. Residues 68-85 (WISMINIFVSANHLSTLE) traverse the membrane as a helical segment. Residues 86–92 (NSFNLRR) are Cytoplasmic-facing. A helical transmembrane segment spans residues 93 to 109 (KFCWIIFLLLVILVKMT). Residues 110 to 117 (SIEQPAAS) lie on the Lumenal side of the membrane. Residues 118 to 133 (LGVLLHENLVYYELKK) form a helical membrane-spanning segment. Topologically, residues 134–149 (NGNQMNVRFFGAIDVS) are cytoplasmic. Residues 150 to 165 (PSIFPIYMNAVMYFVY) form a helical membrane-spanning segment. Residues 166–168 (KRS) lie on the Lumenal side of the membrane. Residues 169–189 (WLEIAMNFMPGHVIYYMDDII) traverse the membrane as a helical segment. At 190 to 211 (GKIYGIDLCKSPYDWFRNTETP) the chain is on the cytoplasmic side.

This sequence belongs to the derlin family. As to quaternary structure, component of the HRD1 ubiquitin ligase complex which contains the E3 ligase HRD1, its cofactors HRD3, USA1 and DER1, substrate recruiting factor YOS9 and CDC48-binding protein UBX2. Within the complex, interacts with USA1 (via C-terminus). In ERAD-L, HRD3 and YOS9 jointly bind misfolded glycoproteins in the endoplasmic reticulum (ER) lumen. Movement of ERAD-L substrates through the ER membrane is facilitated by HRD1 and DER1 which have lateral gates facing each other and which distort the membrane region between the lateral gates, making it much thinner than a normal phospholipid bilayer. Substrates insert into the membrane as a hairpin loop with one strand interacting with DER1 and the other with HRD1. The HRD1 complex interacts with the heterotrimeric CDC48-NPL4-UFD1 ATPase complex which is recruited by UBX2 via its interaction with CDC48 and which moves ubiquitinated substrates to the cytosol for targeting to the proteasome. N-terminally acetylated by acetyltransferase NatB which enhances DER1 stability and is required for ERAD-L function.

Its subcellular location is the endoplasmic reticulum membrane. Its function is as follows. Component of the endoplasmic reticulum-associated degradation (ERAD) pathway. Specifically required for the ERAD-L pathway which mediates the degradation of proteins with misfolded lumenal domains within the endoplasmic reticulum (ER). Facilitates retrotranslocation of misfolded proteins from the ER lumen through the ER membrane in conjunction with HRD1. Both proteins have lateral gates facing each other and distort the membrane region between the lateral gates, making it much thinner than a normal phospholipid bilayer. Substrates insert into the membrane as a hairpin loop with one strand interacting with DER1 and the other with HRD1. The sequence is that of Degradation in the endoplasmic reticulum protein 1 (DER1) from Saccharomyces cerevisiae (strain ATCC 204508 / S288c) (Baker's yeast).